Reading from the N-terminus, the 215-residue chain is Cytochrome b6 (215 aa).

A helical membrane pass occupies residues 32–52 (IFYCLGGITLTCFLVQVATGF). Position 35 (C35) interacts with heme c. Heme b is bound by residues H86 and H100. The next 3 membrane-spanning stretches (helical) occupy residues 90–110 (ASMM…TGGF), 116–136 (LTWV…VTGY), and 186–206 (LHTF…FPMI). Residues H187 and H202 each coordinate heme b.

The protein belongs to the cytochrome b family. PetB subfamily. In terms of assembly, the 4 large subunits of the cytochrome b6-f complex are cytochrome b6, subunit IV (17 kDa polypeptide, PetD), cytochrome f and the Rieske protein, while the 4 small subunits are PetG, PetL, PetM and PetN. The complex functions as a dimer. Heme b serves as cofactor. Requires heme c as cofactor.

The protein localises to the plastid. Its subcellular location is the chloroplast thylakoid membrane. In terms of biological role, component of the cytochrome b6-f complex, which mediates electron transfer between photosystem II (PSII) and photosystem I (PSI), cyclic electron flow around PSI, and state transitions. The sequence is that of Cytochrome b6 from Solanum bulbocastanum (Wild potato).